A 521-amino-acid polypeptide reads, in one-letter code: MEFNIKSGSPEKQRVACVIVGVYESRKLTFAADLLDRISNGFISDVIRHGDMEGKLGSTLVLHSVPHTLCDRVMLVGLGKERDFRAKEYREAVRASVKALTQTSASEAVSYLSELTVKKHDVEWMIEQATVVTLDALYRFDRFKSKQDESVREPRKLTLAVPRRSDLADGEKGLQRGLAIGNGMKLAKDLGNLPGNVCTPSYLGEEARKVAETFGAEAEILGPREIAELGMHSFLSVAKGSAEEARLIVLKHHGAKDKNDKPIVLVGKGITFDSGGISLKPGEGMDEMKYDMCGAATVLGAFRAAVEMNLPLNVIAIVPTCENMPNGNAVKPGDIVTSMSGQTIEILNTDAEGRLILCDALTYAERFSPATVIDVATLTGACVIALGHIATGLYSNQDSLARELLAAGEEVADRAWHMPMWDEYQEMLKSPFADMANIGGRPGGSVTAACFLSRFAKAYDWAHLDIAGTAWKGGKDKGATARPVPLLVQFLQDRADIALGNVVRRGRPRREAPEVADDEQD.

The Mn(2+) site is built by Lys-268 and Asp-273. Lys-280 is a catalytic residue. Positions 291, 350, and 352 each coordinate Mn(2+). Residue Arg-354 is part of the active site.

It belongs to the peptidase M17 family. Requires Mn(2+) as cofactor.

It localises to the cytoplasm. It carries out the reaction Release of an N-terminal amino acid, Xaa-|-Yaa-, in which Xaa is preferably Leu, but may be other amino acids including Pro although not Arg or Lys, and Yaa may be Pro. Amino acid amides and methyl esters are also readily hydrolyzed, but rates on arylamides are exceedingly low.. The enzyme catalyses Release of an N-terminal amino acid, preferentially leucine, but not glutamic or aspartic acids.. Functionally, presumably involved in the processing and regular turnover of intracellular proteins. Catalyzes the removal of unsubstituted N-terminal amino acids from various peptides. This Chromobacterium violaceum (strain ATCC 12472 / DSM 30191 / JCM 1249 / CCUG 213 / NBRC 12614 / NCIMB 9131 / NCTC 9757 / MK) protein is Probable cytosol aminopeptidase.